The primary structure comprises 377 residues: Chaperone protein DnaJ (377 aa).

In terms of domain architecture, J spans 5–70; the sequence is DYYQVLGVSR…KKRSAYDQLG (66 aa). A CR-type zinc finger spans residues 138–216; sequence GVTKIISFKT…CYGEGRYINT (79 aa). Cys151, Cys154, Cys168, Cys171, Cys190, Cys193, Cys204, and Cys207 together coordinate Zn(2+). CXXCXGXG motif repeat units lie at residues 151–158, 168–175, 190–197, and 204–211; these read CDACAGKG, CPTCRGSG, CQTCRGAG, and CTKCYGEG.

It belongs to the DnaJ family. Homodimer. It depends on Zn(2+) as a cofactor.

Its subcellular location is the cytoplasm. In terms of biological role, participates actively in the response to hyperosmotic and heat shock by preventing the aggregation of stress-denatured proteins and by disaggregating proteins, also in an autonomous, DnaK-independent fashion. Unfolded proteins bind initially to DnaJ; upon interaction with the DnaJ-bound protein, DnaK hydrolyzes its bound ATP, resulting in the formation of a stable complex. GrpE releases ADP from DnaK; ATP binding to DnaK triggers the release of the substrate protein, thus completing the reaction cycle. Several rounds of ATP-dependent interactions between DnaJ, DnaK and GrpE are required for fully efficient folding. Also involved, together with DnaK and GrpE, in the DNA replication of plasmids through activation of initiation proteins. The chain is Chaperone protein DnaJ from Orientia tsutsugamushi (strain Boryong) (Rickettsia tsutsugamushi).